We begin with the raw amino-acid sequence, 465 residues long: ATP synthase subunit beta (465 aa).

148-155 lines the ATP pocket; the sequence is GGAGVGKT.

Belongs to the ATPase alpha/beta chains family. In terms of assembly, F-type ATPases have 2 components, CF(1) - the catalytic core - and CF(0) - the membrane proton channel. CF(1) has five subunits: alpha(3), beta(3), gamma(1), delta(1), epsilon(1). CF(0) has three main subunits: a(1), b(2) and c(9-12). The alpha and beta chains form an alternating ring which encloses part of the gamma chain. CF(1) is attached to CF(0) by a central stalk formed by the gamma and epsilon chains, while a peripheral stalk is formed by the delta and b chains.

It localises to the cell inner membrane. The enzyme catalyses ATP + H2O + 4 H(+)(in) = ADP + phosphate + 5 H(+)(out). Functionally, produces ATP from ADP in the presence of a proton gradient across the membrane. The catalytic sites are hosted primarily by the beta subunits. The polypeptide is ATP synthase subunit beta (Chromobacterium violaceum (strain ATCC 12472 / DSM 30191 / JCM 1249 / CCUG 213 / NBRC 12614 / NCIMB 9131 / NCTC 9757 / MK)).